Consider the following 332-residue polypeptide: PRKC apoptosis WT1 regulator protein (332 aa).

2 stretches are compositionally biased toward polar residues: residues 1 to 14 (MATG…STTD) and 52 to 62 (AQTTAAGTSEL). Residues 1-253 (MATGGYRSSG…HNRDTSAPAN (253 aa)) are disordered. The B30.2/SPRY domain-binding motif signature appears at 61 to 65 (ELNHG). Residues 65–79 (GPAGAAAPAAPGPGA) show a composition bias toward low complexity. A Nuclear localization signal motif is present at residues 137 to 153 (RKGKGQIEKRKLREKRR). The segment at 137-195 (RKGKGQIEKRKLREKRRSTGVVNIPAAECLDEYEDDEAGQKERKREDAITQQNTIQNEA) is selective for apoptosis induction in cancer cells (SAC). The residue at position 155 (T155) is a Phosphothreonine; by PKA. Positions 174 to 184 (AGQKERKREDA) are enriched in basic and acidic residues. Residues 176–198 (QKERKREDAITQQNTIQNEAASL) are a coiled coil. Over residues 185-195 (ITQQNTIQNEA) the composition is skewed to polar residues. A Phosphoserine modification is found at S223. Positions 234–247 (PRTDRSGFSRHNRD) are enriched in basic and acidic residues. Residues 292–332 (IGKLKEEIDLLNRDLDDMEDENEQLKQENKTLLKVVGQLTR) are leucine-zipper.

As to quaternary structure, homooligomer. Interacts (via the C-terminal region) with WT1. Interacts with THAP1. Interacts with AATF. Interacts with BACE1. Interacts with SPSB1 (via B30.2/SPRY domain); this interaction is direct and occurs in association with the Elongin BC complex. Interacts with SPSB2 (via B30.2/SPRY domain); this interaction occurs in association with the Elongin BC complex. Interacts with SPSB4 (via B30.2/SPRY domain); this interaction occurs in association with the Elongin BC complex. Component of a ternary complex composed of SQSTM1 and PRKCZ. Interacts with actin. Preferentially phosphorylated at the Thr-155 by PKC in cancer cells.

It is found in the cytoplasm. The protein resides in the nucleus. Functionally, pro-apoptotic protein capable of selectively inducing apoptosis in cancer cells, sensitizing the cells to diverse apoptotic stimuli and causing regression of tumors in animal models. Induces apoptosis in certain cancer cells by activation of the Fas prodeath pathway and coparallel inhibition of NF-kappa-B transcriptional activity. Inhibits the transcriptional activation and augments the transcriptional repression mediated by WT1. Down-regulates the anti-apoptotic protein BCL2 via its interaction with WT1. Also seems to be a transcriptional repressor by itself. May be directly involved in regulating the amyloid precursor protein (APP) cleavage activity of BACE1. In Rattus norvegicus (Rat), this protein is PRKC apoptosis WT1 regulator protein (Pawr).